Consider the following 94-residue polypeptide: Large ribosomal subunit protein eL43A (94 aa).

The C4-type zinc-finger motif lies at 39–62; sequence CPFCGRNTVKRTAAGIWCCNGKGC.

It belongs to the eukaryotic ribosomal protein eL43 family. Component of the large ribosomal subunit (LSU). Mature yeast ribosomes consist of a small (40S) and a large (60S) subunit. The 40S small subunit contains 1 molecule of ribosomal RNA (18S rRNA) and at least 33 different proteins. The large 60S subunit contains 3 rRNA molecules (25S, 5.8S and 5S rRNA) and at least 46 different proteins.

Its subcellular location is the cytoplasm. In terms of biological role, component of the ribosome, a large ribonucleoprotein complex responsible for the synthesis of proteins in the cell. The small ribosomal subunit (SSU) binds messenger RNAs (mRNAs) and translates the encoded message by selecting cognate aminoacyl-transfer RNA (tRNA) molecules. The large subunit (LSU) contains the ribosomal catalytic site termed the peptidyl transferase center (PTC), which catalyzes the formation of peptide bonds, thereby polymerizing the amino acids delivered by tRNAs into a polypeptide chain. The nascent polypeptides leave the ribosome through a tunnel in the LSU and interact with protein factors that function in enzymatic processing, targeting, and the membrane insertion of nascent chains at the exit of the ribosomal tunnel. The sequence is that of Large ribosomal subunit protein eL43A (rpl4301) from Schizosaccharomyces pombe (strain 972 / ATCC 24843) (Fission yeast).